The sequence spans 465 residues: 23S rRNA (uracil(1939)-C(5))-methyltransferase RlmD (465 aa).

A disordered region spans residues 1 to 22 (MSEAVPTSARKSKNAPVAPGPA). The TRAM domain maps to 16–80 (PVAPGPAPVL…PSYEQATVVD (65 aa)). Positions 93, 99, 102, and 181 each coordinate [4Fe-4S] cluster. 6 residues coordinate S-adenosyl-L-methionine: Q289, F318, N323, E339, N367, and D388. The Nucleophile role is filled by C421.

Belongs to the class I-like SAM-binding methyltransferase superfamily. RNA M5U methyltransferase family. RlmD subfamily.

The catalysed reaction is uridine(1939) in 23S rRNA + S-adenosyl-L-methionine = 5-methyluridine(1939) in 23S rRNA + S-adenosyl-L-homocysteine + H(+). Catalyzes the formation of 5-methyl-uridine at position 1939 (m5U1939) in 23S rRNA. The protein is 23S rRNA (uracil(1939)-C(5))-methyltransferase RlmD of Burkholderia ambifaria (strain ATCC BAA-244 / DSM 16087 / CCUG 44356 / LMG 19182 / AMMD) (Burkholderia cepacia (strain AMMD)).